The sequence spans 674 residues: Xaa-Pro aminopeptidase 2 (674 aa).

Residues 1-22 (MAQAYWQCYPWLVLLCACAWSY) form the signal peptide. N-linked (GlcNAc...) asparagine glycosylation occurs at asparagine 65. Arginine 116 contributes to the substrate binding site. Asparagine 278 and asparagine 293 each carry an N-linked (GlcNAc...) asparagine glycan. Histidine 430 lines the substrate pocket. Zn(2+) is bound by residues aspartate 450, aspartate 461, and histidine 524. 3 residues coordinate substrate: histidine 524, histidine 533, and glutamate 555. Residues glutamate 555 and glutamate 569 each coordinate Zn(2+). Alanine 650 carries the GPI-anchor amidated alanine lipid modification. The propeptide at 651–674 (SAPHTTSLASMWVASALAILSWSC) is removed in mature form.

It belongs to the peptidase M24B family. As to quaternary structure, homotrimer. Requires Zn(2+) as cofactor. N-glycosylated. Expressed strongly in lung, liver and heart, and at lower levels in kidney, testis, brain, spleen and skeletal muscle.

The protein localises to the cell membrane. The catalysed reaction is Release of any N-terminal amino acid, including proline, that is linked to proline, even from a dipeptide or tripeptide.. With respect to regulation, inhibited by the chelating agents 1,10-phenanthroline and EDTA. Inhibited by the thiol-containing compounds 2-mercaptoethanol and dithiothreitol. Also inhibited by apstatin, captopril and p-(ch1oromercuri)benzenesulfonic acid. Weakly inhibited by D,L-2-mercaptomethyl-3-guanidinoethylthiopropanoic acid and N-[l-(R,S)-carboxy-(2-phenylethyl)]-Ala-Ala-Phe-p-aminobenzoate. Inhibited by ramiprilat and enalaprilat, in a Mn(2+)-dependent manner. Metal ions have a complex substrate- and concentration-dependent effect on activity. Activity towards Arg-Pro-Pro and Gly-Pro-Hyp is stimulated by Mn(2+) ion concentrations of 10-100 uM and then inhibited at Mn(2+) concentrations of 1-2 mM. Mn(2+) concentrations in excess of 2 mM stimulate activity towards Gly-Pro-Hyp but inhibit activity towards Arg-Pro-Pro. Zn(2+) and Co(2+) ions also inhibit activity towards Arg-Pro-Pro at high concentrations. Activity towards bradykinin is inhibited by Mn(2+) concentrations in excess of 1 mM. Membrane-bound metalloprotease which catalyzes the removal of a penultimate prolyl residue from the N-termini of peptides, such as Arg-Pro-Pro. May play a role in the metabolism of the vasodilator bradykinin. In Rattus norvegicus (Rat), this protein is Xaa-Pro aminopeptidase 2.